Here is a 333-residue protein sequence, read N- to C-terminus: Gap junction alpha-4 protein (333 aa).

Residues 1 to 20 are Cytoplasmic-facing; it reads MGDWGFLEKLLDQVQEHSTV. The chain crosses the membrane as a helical span at residues 21–40; sequence VGKIWLTVLFIFRILILGLA. The Extracellular portion of the chain corresponds to 41 to 76; it reads GESVWGDEQSDFECNTAQPGCTNVCYDQAFPISHIR. The chain crosses the membrane as a helical span at residues 77–99; that stretch reads YWVLQFLFVSTPTLVYLGHVIYL. Topologically, residues 100 to 148 are cytoplasmic; the sequence is SRREERLRQKEGELRALPAKDPQVERALAAVERQMAKISVAEDGRLRIR. A helical membrane pass occupies residues 149-165; the sequence is GALMGTYVASVLCKSVL. The Extracellular portion of the chain corresponds to 166–207; it reads EAGFLYGQWRLYGWTMEPVFVCQRAPCPYLVDCFVSRPTEKT. Residues 208–230 traverse the membrane as a helical segment; sequence IFIIFMLVVGLISLVLNLLELVH. Over 231–333 the chain is Cytoplasmic; the sequence is LLCRCLSRGM…SSSASKKQYV (103 aa). Positions 292–333 are disordered; the sequence is ANLTTEERLASSRPPLFLDPPPQNGQKPPSRPSSSASKKQYV. A compositionally biased stretch (low complexity) spans 323–333; the sequence is PSSSASKKQYV.

It belongs to the connexin family. Alpha-type (group II) subfamily. A connexon is composed of a hexamer of connexins. As to expression, expressed in multiple organs and tissues, including heart, uterus, ovary, and blood vessel endothelium.

The protein resides in the cell membrane. It localises to the cell junction. Its subcellular location is the gap junction. In terms of biological role, one gap junction consists of a cluster of closely packed pairs of transmembrane channels, the connexons, through which materials of low MW diffuse from one cell to a neighboring cell. The polypeptide is Gap junction alpha-4 protein (GJA4) (Homo sapiens (Human)).